The following is a 1207-amino-acid chain: Plasma membrane calcium-transporting ATPase 4 (1207 aa).

Over 1 to 100 the chain is Cytoplasmic; sequence MTNPTEHTLP…KTFLELVWEA (100 aa). Position 13 is a phosphoserine (S13). Residues 101–121 form a helical membrane-spanning segment; the sequence is LQDVTLIILEIAAIISLVLSF. Topologically, residues 122-147 are extracellular; that stretch reads YRPPGGENEQCGLAVTSPEDEGEAEA. Residues 148–168 traverse the membrane as a helical segment; that stretch reads GWIEGAAILFSVIIVVLVTAF. Topologically, residues 169–368 are cytoplasmic; it reads NDWSKEKQFR…LAVQIGKAGL (200 aa). The disordered stretch occupies residues 294 to 317; the sequence is EEEKKKKGKKQGVPENRNKAKTQD. A phosphoserine mark is found at S328 and S334. Residues 369 to 389 form a helical membrane-spanning segment; it reads IMSAITVLILILYFVIDNFVI. Over 390–408 the chain is Extracellular; the sequence is QRRPWLAECTPIYVQYFVK. A helical membrane pass occupies residues 409-429; sequence FFIIGVTVLVVAVPEGLPLAV. The Cytoplasmic portion of the chain corresponds to 430–843; that stretch reads TISLAYSVKK…RNVYDSISKF (414 aa). D465 serves as the catalytic 4-aspartylphosphate intermediate. D785 and D789 together coordinate Mg(2+). Residues 844-864 traverse the membrane as a helical segment; that stretch reads LQFQLTVNVVAVIVAFTGACI. The Extracellular portion of the chain corresponds to 865–871; it reads TQDSPLK. The helical transmembrane segment at 872 to 892 threads the bilayer; the sequence is AVQMLWVNLIMDTFASLALAT. Topologically, residues 893–918 are cytoplasmic; that stretch reads EPPTDSLLKRRPYGRNKPLISRTMMK. Residues 919–939 traverse the membrane as a helical segment; sequence NILGHAVYQLTVIFFLVFAGE. Residues 940–957 are Extracellular-facing; it reads KFFDIDSGRRAPLHSPPS. Residues 958–977 form a helical membrane-spanning segment; sequence QHYTIIFNTFVLMQLFNEIN. Topologically, residues 978–994 are cytoplasmic; the sequence is SRKIHGERNVFSGIFRN. Residues 995 to 1015 form a helical membrane-spanning segment; sequence LIFCSVVLGTFISQIIIVEFG. Over 1016-1028 the chain is Extracellular; it reads GKPFSCTKLTLSQ. A helical membrane pass occupies residues 1029–1049; sequence WFWCLFIGIGELLWGQVISTI. Topologically, residues 1050 to 1207 are cytoplasmic; the sequence is PTQSLKFLKE…SPLHSLETSV (158 aa). The segment at 1086-1103 is calmodulin-binding subdomain A; that stretch reads LRRGQILWFRGLNRIQTQ. T1102 is subject to Phosphothreonine; by PKC. The calmodulin-binding subdomain B stretch occupies residues 1104 to 1113; sequence IKVVKAFHSS. Positions 1159-1181 are disordered; it reads VSKPGTKTSSLDGEVTPQTNKNN. Residues 1163–1181 show a composition bias toward polar residues; it reads GTKTSSLDGEVTPQTNKNN.

Belongs to the cation transport ATPase (P-type) (TC 3.A.3) family. Type IIB subfamily. As to quaternary structure, interacts with PDZD11. Interacts with SLC35G1 and STIM1. Interacts with calmodulin. In terms of tissue distribution, isoform 1 is detected in brain, heart, liver, testis and epididymis. Isoform 2 is detected in brain (at protein level), heart, seminal vesicle and epididymis. There is a shift in expression from isoform 1 to isoform 2 along the length of the epididymis from caput to cauda (at protein level).

The protein resides in the cell membrane. Its subcellular location is the cell projection. The protein localises to the cilium. It is found in the flagellum membrane. The catalysed reaction is Ca(2+)(in) + ATP + H2O = Ca(2+)(out) + ADP + phosphate + H(+). Activated by calcium/calmodulin. Its function is as follows. Calcium/calmodulin-regulated and magnesium-dependent enzyme that catalyzes the hydrolysis of ATP coupled with the transport of calcium out of the cell. By regulating sperm cells calcium homeostasis, may play a role in sperm motility. In Bos taurus (Bovine), this protein is Plasma membrane calcium-transporting ATPase 4.